Consider the following 398-residue polypeptide: Dual-specificity RNA methyltransferase RlmN (398 aa).

The active-site Proton acceptor is the E119. Residues E125–D364 enclose the Radical SAM core domain. The cysteines at positions 132 and 369 are disulfide-linked. [4Fe-4S] cluster-binding residues include C139, C143, and C146. S-adenosyl-L-methionine contacts are provided by residues G193–E194, S225, S247–H249, and N326. The S-methylcysteine intermediate role is filled by C369.

The protein belongs to the radical SAM superfamily. RlmN family. Requires [4Fe-4S] cluster as cofactor.

It localises to the cytoplasm. It carries out the reaction adenosine(2503) in 23S rRNA + 2 reduced [2Fe-2S]-[ferredoxin] + 2 S-adenosyl-L-methionine = 2-methyladenosine(2503) in 23S rRNA + 5'-deoxyadenosine + L-methionine + 2 oxidized [2Fe-2S]-[ferredoxin] + S-adenosyl-L-homocysteine. It catalyses the reaction adenosine(37) in tRNA + 2 reduced [2Fe-2S]-[ferredoxin] + 2 S-adenosyl-L-methionine = 2-methyladenosine(37) in tRNA + 5'-deoxyadenosine + L-methionine + 2 oxidized [2Fe-2S]-[ferredoxin] + S-adenosyl-L-homocysteine. Functionally, specifically methylates position 2 of adenine 2503 in 23S rRNA and position 2 of adenine 37 in tRNAs. m2A2503 modification seems to play a crucial role in the proofreading step occurring at the peptidyl transferase center and thus would serve to optimize ribosomal fidelity. This Yersinia pestis protein is Dual-specificity RNA methyltransferase RlmN.